The primary structure comprises 237 residues: MKFSFFTLFPSLISGYFEDSILKRARDEGRIEIEWVNFREFSQDRFKKVDEYQIGGGAGLVIEPRVVTQAISELKAKNQDAKILFLLPAGKPFTHQDACRLAQKESHLVLVCGRYEGIDERAIEANADEVFCMGDYILTGGEIAALALCDAVSRQIPGVLGNEESLQGESFDSFLLEAPVFARSKTPEGLSAPSEYSKGNHAKICALKRRLSLAKTQYYRPDLYKKYKIQESDKGKK.

Residues G113 and M133–L138 contribute to the S-adenosyl-L-methionine site.

The protein belongs to the RNA methyltransferase TrmD family. In terms of assembly, homodimer.

It is found in the cytoplasm. The enzyme catalyses guanosine(37) in tRNA + S-adenosyl-L-methionine = N(1)-methylguanosine(37) in tRNA + S-adenosyl-L-homocysteine + H(+). Its function is as follows. Specifically methylates guanosine-37 in various tRNAs. This Wolinella succinogenes (strain ATCC 29543 / DSM 1740 / CCUG 13145 / JCM 31913 / LMG 7466 / NCTC 11488 / FDC 602W) (Vibrio succinogenes) protein is tRNA (guanine-N(1)-)-methyltransferase.